Consider the following 160-residue polypeptide: SsrA-binding protein (160 aa).

This sequence belongs to the SmpB family.

The protein localises to the cytoplasm. In terms of biological role, required for rescue of stalled ribosomes mediated by trans-translation. Binds to transfer-messenger RNA (tmRNA), required for stable association of tmRNA with ribosomes. tmRNA and SmpB together mimic tRNA shape, replacing the anticodon stem-loop with SmpB. tmRNA is encoded by the ssrA gene; the 2 termini fold to resemble tRNA(Ala) and it encodes a 'tag peptide', a short internal open reading frame. During trans-translation Ala-aminoacylated tmRNA acts like a tRNA, entering the A-site of stalled ribosomes, displacing the stalled mRNA. The ribosome then switches to translate the ORF on the tmRNA; the nascent peptide is terminated with the 'tag peptide' encoded by the tmRNA and targeted for degradation. The ribosome is freed to recommence translation, which seems to be the essential function of trans-translation. The protein is SsrA-binding protein of Proteus mirabilis (strain HI4320).